Reading from the N-terminus, the 160-residue chain is Globin CTT-II beta (160 aa).

An N-terminal signal peptide occupies residues 1 to 15 (MKFLVLALCIAAAVA). The 144-residue stretch at 17–160 (PLSADEASLV…NVFNMMFSYL (144 aa)) folds into the Globin domain. H75 and H110 together coordinate heme b.

The protein belongs to the globin family. As to quaternary structure, homodimer.

The sequence is that of Globin CTT-II beta from Chironomus thummi thummi (Midge).